Consider the following 70-residue polypeptide: Large ribosomal subunit protein bL31 (70 aa).

Positions 16, 18, 37, and 40 each coordinate Zn(2+).

The protein belongs to the bacterial ribosomal protein bL31 family. Type A subfamily. Part of the 50S ribosomal subunit. Zn(2+) serves as cofactor.

Its function is as follows. Binds the 23S rRNA. This chain is Large ribosomal subunit protein bL31, found in Shewanella halifaxensis (strain HAW-EB4).